We begin with the raw amino-acid sequence, 175 residues long: Urease accessory protein UreE (175 aa).

Positions 134 to 175 (FQPESGAYGGGHHHGDESATDLHNPGHGPHRSVPKIHEFKPR) are disordered.

The protein belongs to the UreE family.

Its subcellular location is the cytoplasm. In terms of biological role, involved in urease metallocenter assembly. Binds nickel. Probably functions as a nickel donor during metallocenter assembly. The sequence is that of Urease accessory protein UreE from Dechloromonas aromatica (strain RCB).